The following is a 365-amino-acid chain: Heme A synthase (365 aa).

The next 5 membrane-spanning stretches (helical) occupy residues 23–43 (LLRIWLRVVLFTLFCLVLVGG), 109–129 (LLARTIGLVFALPLAFFWLTG), 137–157 (LPLVGLLALGGFQGFVGWWMV), 172–192 (LATHLTIACLIFAGCMWILRG), and 208–228 (GFAALLTVLCLFQIYLGALVA). His272 serves as a coordination point for heme. 3 helical membrane-spanning segments follow: residues 274 to 294 (LGAYTLFAATLWHMVSMARAL), 303 to 323 (AVLFFVLISVQAGLGITTLLM), and 327 to 347 (IHVALAHQGMALILLGFSVAH). His333 lines the heme pocket.

Belongs to the COX15/CtaA family. Type 2 subfamily. Interacts with CtaB. Heme b serves as cofactor.

It localises to the cell membrane. It catalyses the reaction Fe(II)-heme o + 2 A + H2O = Fe(II)-heme a + 2 AH2. Its pathway is porphyrin-containing compound metabolism; heme A biosynthesis; heme A from heme O: step 1/1. Functionally, catalyzes the conversion of heme O to heme A by two successive hydroxylations of the methyl group at C8. The first hydroxylation forms heme I, the second hydroxylation results in an unstable dihydroxymethyl group, which spontaneously dehydrates, resulting in the formyl group of heme A. The protein is Heme A synthase of Agrobacterium fabrum (strain C58 / ATCC 33970) (Agrobacterium tumefaciens (strain C58)).